The chain runs to 101 residues: Iron-sulfur cluster assembly protein CyaY (101 aa).

It belongs to the frataxin family.

Functionally, involved in iron-sulfur (Fe-S) cluster assembly. May act as a regulator of Fe-S biogenesis. In Actinobacillus pleuropneumoniae serotype 5b (strain L20), this protein is Iron-sulfur cluster assembly protein CyaY.